Here is a 325-residue protein sequence, read N- to C-terminus: MARKKISVIGAGNVGATVAQFLATKELGDVYLFDVVDGIPEGKALDIQEGAPHWGYDLDVVGFSTSDSSNYKNMEGSDVIVVTAGMARKPGMSREDLFDKNVEIIADVSKNIKKYSPDSIIVVVSNPADIMAYALQKISGVDPQRIMGLGGSLDSSRFRTFLAKELDVSVEDVNAFVIGGHGDDMVPFIRYSSVAGIPIEKLLPKEKIDAIVKRTRFGGGEIVNYLKAGSAYYAPGISITAMVESVIKDKKRVIPCAAYITGKHAEHYGINNKFIGVPIKIGERGVEEIYDIDFLPEELELWKKSVASVEASSKNVDEWLKKHPQ.

Residues 10 to 15 (GAGNVG) and aspartate 34 each bind NAD(+). Arginine 88 and arginine 94 together coordinate substrate. NAD(+) is bound by residues asparagine 101 and 124–126 (VSN). Substrate contacts are provided by asparagine 126 and arginine 157. Histidine 181 serves as the catalytic Proton acceptor.

It belongs to the LDH/MDH superfamily.

The catalysed reaction is (S)-malate + NAD(+) = oxaloacetate + NADH + H(+). Catalyzes the reversible oxidation of malate to oxaloacetate. This Thermoplasma volcanium (strain ATCC 51530 / DSM 4299 / JCM 9571 / NBRC 15438 / GSS1) protein is Malate dehydrogenase (mdh).